The primary structure comprises 133 residues: Small ribosomal subunit protein uS11 (133 aa).

This sequence belongs to the universal ribosomal protein uS11 family. As to quaternary structure, part of the 30S ribosomal subunit. Interacts with proteins S7 and S18. Binds to IF-3.

Functionally, located on the platform of the 30S subunit, it bridges several disparate RNA helices of the 16S rRNA. Forms part of the Shine-Dalgarno cleft in the 70S ribosome. The sequence is that of Small ribosomal subunit protein uS11 from Methylibium petroleiphilum (strain ATCC BAA-1232 / LMG 22953 / PM1).